Consider the following 391-residue polypeptide: Thioredoxin-interacting protein (391 aa).

Residue Lys-212 forms a Glycyl lysine isopeptide (Lys-Gly) (interchain with G-Cter in ubiquitin) linkage. Ser-361 is modified (phosphoserine).

Belongs to the arrestin family. Homodimer; disulfide-linked. Interacts with TXN/thioredoxin through its redox-active site. Interacts with transcriptional repressors ZBTB16, ZBTB32 and HDAC1. Interacts with DDIT4. Post-translationally, ubiquitinated; undergoes heterotypic 'Lys-48'-/'Lys-63'-branched polyubiquitination catalyzed by ITCH and UBR5 resulting in proteasomal degradation. Deubiquitinated by USP5, leading to TXNIP stabilization.

It is found in the cytoplasm. In terms of biological role, may act as an oxidative stress mediator by inhibiting thioredoxin activity or by limiting its bioavailability. Interacts with COPS5 and restores COPS5-induced suppression of CDKN1B stability, blocking the COPS5-mediated translocation of CDKN1B from the nucleus to the cytoplasm. Functions as a transcriptional repressor, possibly by acting as a bridge molecule between transcription factors and corepressor complexes, and over-expression will induce G0/G1 cell cycle arrest. Required for the maturation of natural killer cells. Acts as a suppressor of tumor cell growth. Inhibits the proteasomal degradation of DDIT4, and thereby contributes to the inhibition of the mammalian target of rapamycin complex 1 (mTORC1). This chain is Thioredoxin-interacting protein (TXNIP), found in Sus scrofa (Pig).